Here is a 795-residue protein sequence, read N- to C-terminus: Phenylalanine--tRNA ligase beta subunit (795 aa).

Positions 39–148 (KSEFHGVVVG…KETLVGINVY (110 aa)) constitute a tRNA-binding domain. One can recognise a B5 domain in the interval 400–475 (HKNNTIRLHH…RIYEYNNVHL (76 aa)). Mg(2+)-binding residues include Asp453, Asp459, and Asp463. Residues 701–794 (SKFPTVRRDI…LQKKFQAVLR (94 aa)) form the FDX-ACB domain.

The protein belongs to the phenylalanyl-tRNA synthetase beta subunit family. Type 1 subfamily. As to quaternary structure, tetramer of two alpha and two beta subunits. It depends on Mg(2+) as a cofactor.

It localises to the cytoplasm. It carries out the reaction tRNA(Phe) + L-phenylalanine + ATP = L-phenylalanyl-tRNA(Phe) + AMP + diphosphate + H(+). This is Phenylalanine--tRNA ligase beta subunit (pheT) from Buchnera aphidicola subsp. Acyrthosiphon pisum (strain APS) (Acyrthosiphon pisum symbiotic bacterium).